The primary structure comprises 457 residues: Glycine receptor subunit alpha-1 (457 aa).

An N-terminal signal peptide occupies residues 1–28 (MYSFNTLRFYLWETIVFFSLAASKEAEA). At 29–250 (ARSAPKPMSP…RFHLERQMGY (222 aa)) the chain is on the extracellular side. Asn66 carries an N-linked (GlcNAc...) asparagine glycan. Residues Arg93 and Ser157 each contribute to the glycine site. An intrachain disulfide couples Cys166 to Cys180. Zn(2+)-binding residues include Glu220 and Asp222. Cys226 and Cys237 are oxidised to a cystine. Strychnine is bound at residue 230 to 235 (YNTGKF). Thr232 contacts glycine. Residue His243 coordinates Zn(2+). The helical transmembrane segment at 251–272 (YLIQMYIPSLLIVILSWISFWI) threads the bilayer. Residues 273-277 (NMDAA) are Cytoplasmic-facing. The helical transmembrane segment at 278–298 (PARVGLGITTVLTMTTQSSGS) threads the bilayer. Topologically, residues 299–309 (RASLPKVSYVK) are extracellular. A helical transmembrane segment spans residues 310-330 (AIDIWMAVCLLFVFSALLEYA). Residues 331 to 425 (AVNFVSRQHK…FIQRAKKIDK (95 aa)) are Cytoplasmic-facing. Residues 391 to 410 (KGANNNNTTNPPPAPSKSPE) form a disordered region. The chain crosses the membrane as a helical span at residues 426–446 (ISRIGFPMAFLIFNMFYWIIY). Topologically, residues 447-457 (KIVRREDVHNK) are extracellular.

Belongs to the ligand-gated ion channel (TC 1.A.9) family. Glycine receptor (TC 1.A.9.3) subfamily. GLRA1 sub-subfamily. Interacts with GLRB to form heteropentameric channels; this is probably the predominant form in vivo. Heteropentamer composed of four GLRA1 subunits and one GLRB subunit. Heteropentamer composed of two GLRA1 and three GLRB. Heteropentamer composed of three GLRA1 and two GLRB. Homopentamer (in vitro). Both homopentamers and heteropentamers form functional ion channels, but their characteristics are subtly different. In terms of tissue distribution, detected in spinal cord neurons. Detected in brain stem neurons. Detected at lower levels in hippocampus and cerebellum. Detected in the inner plexiform layer of the retina (at protein level).

The protein localises to the postsynaptic cell membrane. It localises to the synapse. The protein resides in the perikaryon. Its subcellular location is the cell projection. It is found in the dendrite. The protein localises to the cell membrane. It catalyses the reaction chloride(in) = chloride(out). Channel opening is triggered by extracellular glycine. Channel characteristics depend on the subunit composition; heteropentameric channels are activated by lower glycine levels and display faster desensitization. Channel opening is also triggered by taurine and beta-alanine. Inhibited by strychnine. Strychnine binding locks the channel in a closed conformation and prevents channel opening in response to extracellular glycine. Inhibited by picrotoxin. Channel activity is enhanced by 5 uM Zn(2+) and inhibited by 100 uM Zn(2+). Subunit of heteromeric glycine-gated chloride channels. Plays an important role in the down-regulation of neuronal excitability. Contributes to the generation of inhibitory postsynaptic currents. Channel activity is potentiated by ethanol. Potentiation of channel activity by intoxicating levels of ethanol contribute to the sedative effects of ethanol. The polypeptide is Glycine receptor subunit alpha-1 (Glra1) (Mus musculus (Mouse)).